Reading from the N-terminus, the 1079-residue chain is Capping protein inhibiting regulator of actin dynamics (1079 aa).

Residues 1-11 (MSQENVSDKVR) show a composition bias toward basic and acidic residues. Disordered regions lie at residues 1-293 (MSQE…EEER), 308-327 (ERKR…AEKR), 341-383 (EHRI…EWKR), 420-453 (PVTP…PTLS), 493-522 (EGKK…VFES), 606-639 (IFGQ…VQSR), and 658-1054 (PSFL…TTQV). A compositionally biased stretch (acidic residues) spans 36–45 (DEGSSDEEEV). Positions 64-76 (SAKEKSVSHDTVQ) are enriched in basic and acidic residues. A compositionally biased stretch (basic residues) spans 115–134 (AKHKLSVKPKNQRVSRKHRR). The span at 140-158 (HEDDFSEIQEEFEKDEEVF) shows a compositional bias: acidic residues. The segment covering 159–293 (DSSREDYGII…EERKRAEEER (135 aa)) has biased composition (basic and acidic residues). Over residues 420–434 (PVTPATGQQGETTAE) the composition is skewed to polar residues. Residues 670–682 (PKSQRSESGSPIQ) are compositionally biased toward polar residues. Positions 684–695 (ESEDSDTKDEDG) are enriched in acidic residues. Over residues 756-781 (DNSTLSEKSSPISPQQENIEFQTTVA) the composition is skewed to polar residues. 2 stretches are compositionally biased toward basic and acidic residues: residues 896-930 (WREK…DKET) and 944-983 (GFRE…EDKG). A compositionally biased stretch (polar residues) spans 984-993 (NGSSSIISKH). Residues 994–1016 (QTADENKRPDTLLARFERRDNLK) are compositionally biased toward basic and acidic residues. Polar residues predominate over residues 1020–1033 (TLPSSVTVEITDST).

Directly interacts with actin-capping proteins; this interaction decreases the binding of capping proteins to actin.

The protein localises to the cytoplasm. It localises to the cytosol. Its function is as follows. Involved in epithelial cell integrity by acting on the maintenance of the actin cytoskeleton. Positively regulates the actin polymerization, by inhibiting the interaction of actin-capping proteins with actin. In Danio rerio (Zebrafish), this protein is Capping protein inhibiting regulator of actin dynamics (crad).